Reading from the N-terminus, the 281-residue chain is 1-acyl-sn-glycerol-3-phosphate acyltransferase (281 aa).

3 helical membrane-spanning segments follow: residues 40–60 (IFVC…IMVL), 71–91 (LGNL…GIPI), and 110–130 (ASPI…VGVA). Positions 109 to 114 (HASPID) match the HXXXXD motif motif.

Belongs to the 1-acyl-sn-glycerol-3-phosphate acyltransferase family.

It is found in the membrane. The enzyme catalyses a 1-acyl-sn-glycero-3-phosphate + an acyl-CoA = a 1,2-diacyl-sn-glycero-3-phosphate + CoA. It participates in phospholipid metabolism; CDP-diacylglycerol biosynthesis; CDP-diacylglycerol from sn-glycerol 3-phosphate: step 2/3. Its function is as follows. Converts lysophosphatidic acid (LPA) into phosphatidic acid by incorporating acyl moiety at the 2 position. This enzyme uses erucoyl-CoA as an acyl donor. In Limnanthes douglasii (Douglas' meadowfoam), this protein is 1-acyl-sn-glycerol-3-phosphate acyltransferase (PLSC).